A 130-amino-acid chain; its full sequence is Holin-like protein CidA (130 aa).

4 consecutive transmembrane segments (helical) span residues 6–26 (FVIK…IGTE), 31–51 (LHIP…LLQF), 65–85 (FLLK…MDVA), and 93–113 (ILFF…SGYI).

It belongs to the CidA/LrgA family. CidA subfamily.

The protein localises to the cell membrane. Functionally, increases the activity of extracellular murein hydrolases possibly by mediating their export via hole formation. Inhibited by the antiholin-like proteins LrgAB. In an unstressed cell, the LrgAB products probably inhibit the function of the CidAB proteins. When a cell is stressed by the addition of antibiotics or by other factors in the environment, the CidAB proteins possibly oligomerize within the bacterial cell membrane, creating lesions that disrupt the proton motive force, which in turn results in loss of cell viability. These lesions are also hypothesized to regulate the subsequent cell lysis by either allowing the murein hydrolases access to the cell wall substrate and/or regulating their activity by a possible change in the cell wall pH that results from loss of membrane potential. The polypeptide is Holin-like protein CidA (Staphylococcus epidermidis (strain ATCC 35984 / DSM 28319 / BCRC 17069 / CCUG 31568 / BM 3577 / RP62A)).